We begin with the raw amino-acid sequence, 711 residues long: MAALGRPGSGPRAAVPAWKREILERKRAKLAALGGGAGPGAAEPEQRVLAESLGPLRENPFMLLEAERRRGGGAAGARLLERYRRVPGVRALRADSVLIIETVPGFPPAPPAPGAAQIRAAEVLVYGAPPGRVSRLLERFDPPAAPRRRGSPERARPPPPPPPPAPPRPPPAAPSPPAAPGPRGGGASPGARRSDFLQKTGSNSFTVHPRGLHRGAGARLLSNGHSAPEPRAGPANRLAGSPPGSGQWKPKVESGDPSLHPPPSPGTPSATPASPPASATPSQRQCVSAATSTNDSFEIRPAPKPVMETIPLGDLQARALASLRANSRNSFMVIPKSKASGAPPPEGRQSVELPKGDLGPASPSQELGSQPVPGGDGAPALGKSPLEVEAQWAVEEGACPRTATALADRAIRWQRPSSPPPFLPAASEEAEPAEGLRVPGLAKNSREYVRPGLPVTFIDEVDSEEAPQAAKLPYLPHPARPLHPARPGCVAELQPRGSNTFTVVPKRKPGTLQDQHFSQANREPRPREAEEEEASCLLGPTLKKRYPTVHEIEVIGGYLALQKSCLTKAGSSRKKMKISFNDKSLQTTFEYPSESSLEQEEEVDQQEEEEEEEEEEEEEEEGSGSEEKPFALFLPRATFVSSVRPESSRLPEGSSGLSSYTPKHSVAFSKWQEQALEQAPREAEPPPVEAMLTPASQNDLSDFRSEPALYF.

Disordered stretches follow at residues 134–305, 328–384, and 414–438; these read SRLL…APKP, RNSF…LGKS, and QRPS…GLRV. Residues 157–180 show a composition bias toward pro residues; it reads PPPPPPPPAPPRPPPAAPSPPAAP. The segment covering 197–206 has biased composition (polar residues); it reads LQKTGSNSFT. Residue Ser-241 is modified to Phosphoserine. Positions 267 to 282 are enriched in low complexity; it reads TPSATPASPPASATPS. Positions 283-296 are enriched in polar residues; the sequence is QRQCVSAATSTNDS. Phosphoserine occurs at positions 362, 418, and 463. Disordered regions lie at residues 500–535, 572–630, 642–662, and 674–711; these read TFTV…EEAS, SRKK…EKPF, SVRP…SYTP, and QALE…ALYF. 2 stretches are compositionally biased toward polar residues: residues 512-521 and 581-590; these read LQDQHFSQAN and NDKSLQTTFE. The segment covering 597-624 has biased composition (acidic residues); that stretch reads LEQEEEVDQQEEEEEEEEEEEEEEEGSG.

The protein belongs to the taperin family. Interacts with GRXCR2; the interaction restricts TPRN to the stereocilum basal region. Interacts with actin ACTB; the interaction may stabilize stereocilia. Interacts with CLIC5. Interacts with PTPRQ. TPRN, CLIC5 and PTPQR form concentric rings at the base of stereocilia and may form a complex. Interacts with phosphatase PPP1CA; the interaction results in inhibition of PPC1A phosphatase activity. Interacts with DNA damage response proteins XRCC6/KU70, XRCC5/KU80, PARP1, TOP1 and TOP2A; these interactions recruit TPRN to sites of DNA damage where it may play a role in DNA repair. As to expression, expression is detected in fetal cochlea.

The protein resides in the cell projection. It is found in the stereocilium. The protein localises to the microvillus. Its subcellular location is the nucleus. It localises to the nucleoplasm. The protein resides in the cytoplasm. Functionally, essential for hearing. Required for maintenance of stereocilia on both inner and outer hair cells. Necessary for the integrity of the stereociliary rootlet. May act as an actin cytoskeleton regulator involved in the regulation of actin dynamics at the pointed end in hair cells. Forms rings at the base of stereocilia and binds actin filaments in the stereocilia which may stabilize the stereocilia. Acts as a strong inhibitor of PPP1CA phosphatase activity. Recruited to sites of DNA damage and may play a role in DNA damage repair. This is Taperin (TPRN) from Homo sapiens (Human).